Consider the following 352-residue polypeptide: Thymidine kinase (352 aa).

32-39 (GVYGIGKS) provides a ligand contact to ATP. Residue glutamate 60 is the Proton acceptor of the active site. The substrate site is built by tyrosine 78, glutamine 102, phenylalanine 105, and phenylalanine 148. Arginine 192 is an ATP binding site. Residue arginine 198 participates in substrate binding.

Belongs to the herpesviridae thymidine kinase family. Homodimer.

It catalyses the reaction thymidine + ATP = dTMP + ADP + H(+). Catalyzes the transfer of the gamma-phospho group of ATP to thymidine to generate dTMP in the salvage pathway of pyrimidine synthesis. The dTMP serves as a substrate for DNA polymerase during viral DNA replication. Allows the virus to be reactivated and to grow in non-proliferative cells lacking a high concentration of phosphorylated nucleic acid precursors. The sequence is that of Thymidine kinase from Equine herpesvirus 4 (strain 1942) (EHV-4).